A 456-amino-acid polypeptide reads, in one-letter code: tRNA modification GTPase MnmE (456 aa).

3 residues coordinate (6S)-5-formyl-5,6,7,8-tetrahydrofolate: lysine 29, glutamate 87, and arginine 126. Residues 222 to 380 (GYKLAIIGRP…LLSLLASWLD (159 aa)) form the TrmE-type G domain. Position 232 (asparagine 232) interacts with K(+). GTP is bound by residues 232-237 (NVGKSS), 251-257 (SDIPGTT), and 276-279 (DTAG). Serine 236 lines the Mg(2+) pocket. K(+)-binding residues include serine 251, isoleucine 253, and threonine 256. Threonine 257 is a Mg(2+) binding site. Residue lysine 456 coordinates (6S)-5-formyl-5,6,7,8-tetrahydrofolate.

This sequence belongs to the TRAFAC class TrmE-Era-EngA-EngB-Septin-like GTPase superfamily. TrmE GTPase family. In terms of assembly, homodimer. Heterotetramer of two MnmE and two MnmG subunits. Requires K(+) as cofactor.

It is found in the cytoplasm. Exhibits a very high intrinsic GTPase hydrolysis rate. Involved in the addition of a carboxymethylaminomethyl (cmnm) group at the wobble position (U34) of certain tRNAs, forming tRNA-cmnm(5)s(2)U34. The protein is tRNA modification GTPase MnmE of Wolinella succinogenes (strain ATCC 29543 / DSM 1740 / CCUG 13145 / JCM 31913 / LMG 7466 / NCTC 11488 / FDC 602W) (Vibrio succinogenes).